The sequence spans 329 residues: Putative methylthioribose-1-phosphate isomerase (329 aa).

Substrate-binding positions include 50-52 (RGA), Arg-84, and Gln-182. Catalysis depends on Asp-223, which acts as the Proton donor. 233-234 (NK) is a substrate binding site.

This sequence belongs to the eIF-2B alpha/beta/delta subunits family. MtnA subfamily.

It catalyses the reaction 5-(methylsulfanyl)-alpha-D-ribose 1-phosphate = 5-(methylsulfanyl)-D-ribulose 1-phosphate. In terms of biological role, catalyzes the interconversion of methylthioribose-1-phosphate (MTR-1-P) into methylthioribulose-1-phosphate (MTRu-1-P). This is Putative methylthioribose-1-phosphate isomerase from Methanocaldococcus jannaschii (strain ATCC 43067 / DSM 2661 / JAL-1 / JCM 10045 / NBRC 100440) (Methanococcus jannaschii).